We begin with the raw amino-acid sequence, 361 residues long: Queuine tRNA-ribosyltransferase (361 aa).

Asp-92 (proton acceptor) is an active-site residue. Residues 92-96 (DSGGF), Asp-146, Gln-189, and Gly-216 contribute to the substrate site. The RNA binding stretch occupies residues 247-253 (GVGKPAD). Asp-266 (nucleophile) is an active-site residue. An RNA binding; important for wobble base 34 recognition region spans residues 271–275 (TRSGR). The Zn(2+) site is built by Cys-304, Cys-306, Cys-309, and His-335.

This sequence belongs to the queuine tRNA-ribosyltransferase family. In terms of assembly, homodimer. Within each dimer, one monomer is responsible for RNA recognition and catalysis, while the other monomer binds to the replacement base PreQ1. It depends on Zn(2+) as a cofactor.

It carries out the reaction 7-aminomethyl-7-carbaguanine + guanosine(34) in tRNA = 7-aminomethyl-7-carbaguanosine(34) in tRNA + guanine. It functions in the pathway tRNA modification; tRNA-queuosine biosynthesis. Its function is as follows. Catalyzes the base-exchange of a guanine (G) residue with the queuine precursor 7-aminomethyl-7-deazaguanine (PreQ1) at position 34 (anticodon wobble position) in tRNAs with GU(N) anticodons (tRNA-Asp, -Asn, -His and -Tyr). Catalysis occurs through a double-displacement mechanism. The nucleophile active site attacks the C1' of nucleotide 34 to detach the guanine base from the RNA, forming a covalent enzyme-RNA intermediate. The proton acceptor active site deprotonates the incoming PreQ1, allowing a nucleophilic attack on the C1' of the ribose to form the product. After dissociation, two additional enzymatic reactions on the tRNA convert PreQ1 to queuine (Q), resulting in the hypermodified nucleoside queuosine (7-(((4,5-cis-dihydroxy-2-cyclopenten-1-yl)amino)methyl)-7-deazaguanosine). This is Queuine tRNA-ribosyltransferase from Rickettsia canadensis (strain McKiel).